The sequence spans 360 residues: S-adenosylmethionine:tRNA ribosyltransferase-isomerase (360 aa).

It belongs to the QueA family. In terms of assembly, monomer.

It localises to the cytoplasm. It catalyses the reaction 7-aminomethyl-7-carbaguanosine(34) in tRNA + S-adenosyl-L-methionine = epoxyqueuosine(34) in tRNA + adenine + L-methionine + 2 H(+). It functions in the pathway tRNA modification; tRNA-queuosine biosynthesis. In terms of biological role, transfers and isomerizes the ribose moiety from AdoMet to the 7-aminomethyl group of 7-deazaguanine (preQ1-tRNA) to give epoxyqueuosine (oQ-tRNA). The polypeptide is S-adenosylmethionine:tRNA ribosyltransferase-isomerase (Burkholderia pseudomallei (strain K96243)).